The following is a 357-amino-acid chain: Glutamate 5-kinase (357 aa).

An ATP-binding site is contributed by K7. Positions 43, 130, and 142 each coordinate substrate. Residues 162–163 (TD) and 205–211 (TGGMTTK) contribute to the ATP site. The 72-residue stretch at 270-341 (EGELCLDQGA…QALSVVTDAE (72 aa)) folds into the PUA domain.

This sequence belongs to the glutamate 5-kinase family.

It is found in the cytoplasm. It catalyses the reaction L-glutamate + ATP = L-glutamyl 5-phosphate + ADP. It functions in the pathway amino-acid biosynthesis; L-proline biosynthesis; L-glutamate 5-semialdehyde from L-glutamate: step 1/2. Catalyzes the transfer of a phosphate group to glutamate to form L-glutamate 5-phosphate. The sequence is that of Glutamate 5-kinase from Synechococcus sp. (strain CC9902).